Consider the following 281-residue polypeptide: Shikimate dehydrogenase (NADP(+)) (281 aa).

Shikimate is bound by residues 19–21 (SFS) and threonine 66. Lysine 70 (proton acceptor) is an active-site residue. Shikimate is bound by residues asparagine 91 and aspartate 104. NADP(+) is bound by residues 127 to 131 (GAGGA) and isoleucine 223. Residue tyrosine 225 participates in shikimate binding. NADP(+) is bound at residue glycine 246.

The protein belongs to the shikimate dehydrogenase family. As to quaternary structure, homodimer.

It catalyses the reaction shikimate + NADP(+) = 3-dehydroshikimate + NADPH + H(+). The protein operates within metabolic intermediate biosynthesis; chorismate biosynthesis; chorismate from D-erythrose 4-phosphate and phosphoenolpyruvate: step 4/7. Its function is as follows. Involved in the biosynthesis of the chorismate, which leads to the biosynthesis of aromatic amino acids. Catalyzes the reversible NADPH linked reduction of 3-dehydroshikimate (DHSA) to yield shikimate (SA). The polypeptide is Shikimate dehydrogenase (NADP(+)) (Methanobrevibacter smithii (strain ATCC 35061 / DSM 861 / OCM 144 / PS)).